Consider the following 473-residue polypeptide: Probable aspartokinase (473 aa).

2 consecutive ACT domains span residues 323–392 (IFGA…FLNN) and 409–473 (VVGA…KTNS).

The protein belongs to the aspartokinase family.

The enzyme catalyses L-aspartate + ATP = 4-phospho-L-aspartate + ADP. It functions in the pathway amino-acid biosynthesis; L-lysine biosynthesis via DAP pathway; (S)-tetrahydrodipicolinate from L-aspartate: step 1/4. It participates in amino-acid biosynthesis; L-methionine biosynthesis via de novo pathway; L-homoserine from L-aspartate: step 1/3. The protein operates within amino-acid biosynthesis; L-threonine biosynthesis; L-threonine from L-aspartate: step 1/5. In Methanocaldococcus jannaschii (strain ATCC 43067 / DSM 2661 / JAL-1 / JCM 10045 / NBRC 100440) (Methanococcus jannaschii), this protein is Probable aspartokinase.